The sequence spans 189 residues: Protein GrpE (189 aa).

Polar residues predominate over residues 1–20 (MSDQQHSAPQNAAATASPSD). Residues 1-29 (MSDQQHSAPQNAAATASPSDSPEAVEATM) are disordered.

It belongs to the GrpE family. As to quaternary structure, homodimer.

It localises to the cytoplasm. Functionally, participates actively in the response to hyperosmotic and heat shock by preventing the aggregation of stress-denatured proteins, in association with DnaK and GrpE. It is the nucleotide exchange factor for DnaK and may function as a thermosensor. Unfolded proteins bind initially to DnaJ; upon interaction with the DnaJ-bound protein, DnaK hydrolyzes its bound ATP, resulting in the formation of a stable complex. GrpE releases ADP from DnaK; ATP binding to DnaK triggers the release of the substrate protein, thus completing the reaction cycle. Several rounds of ATP-dependent interactions between DnaJ, DnaK and GrpE are required for fully efficient folding. The polypeptide is Protein GrpE (Paracidovorax citrulli (strain AAC00-1) (Acidovorax citrulli)).